Here is a 169-residue protein sequence, read N- to C-terminus: Large ribosomal subunit protein uL10 (169 aa).

It belongs to the universal ribosomal protein uL10 family. In terms of assembly, part of the ribosomal stalk of the 50S ribosomal subunit. The N-terminus interacts with L11 and the large rRNA to form the base of the stalk. The C-terminus forms an elongated spine to which L12 dimers bind in a sequential fashion forming a multimeric L10(L12)X complex.

Its function is as follows. Forms part of the ribosomal stalk, playing a central role in the interaction of the ribosome with GTP-bound translation factors. This is Large ribosomal subunit protein uL10 from Deinococcus geothermalis (strain DSM 11300 / CIP 105573 / AG-3a).